The chain runs to 426 residues: COP9 signalosome complex subunit 6 (426 aa).

An MPN domain is found at 14-155; the sequence is VLLHPLVIMQ…AGTTRKLPLF (142 aa). A disordered region spans residues 320–426; the sequence is PVRFKSQHLG…NESDESSQAS (107 aa). Residues 334-347 are compositionally biased toward acidic residues; it reads ADDDDYFDDEDLEN.

It belongs to the peptidase M67A family. CSN6 subfamily. Component of the CSN complex, probably composed of csn-1, csn-2, csn-3, csn-4, csn-5, csn-6 and csn-7. Within the complex it probably interacts directly with csn-2 and csn-4. Interacts with rbx-1.

Its subcellular location is the cytoplasm. It is found in the nucleus. Component of the COP9 signalosome complex (CSN), a complex involved in various cellular and developmental processes. The CSN complex is an essential regulator of the ubiquitin (Ubl) conjugation pathway by mediating the deneddylation of the cullin subunits of the SCF-type E3 ligase complexes, leading to decrease the Ubl ligase activity of SCF. The CSN complex plays an essential role in embryogenesis and oogenesis and is required to regulate microtubule stability in the early embryo. Mediates mei-3/katanin targeting for degradation at the meiosis to mitosis transition via deneddylation of cul-3. In Caenorhabditis elegans, this protein is COP9 signalosome complex subunit 6 (csn-6).